The sequence spans 1043 residues: Glutamate receptor ionotropic, NMDA 3B (1043 aa).

The signal sequence occupies residues 1-22 (MEFVRALWLGLALALGPGSAGG). Topologically, residues 23–574 (HPQPCGVLAR…PIGAFMWPLH (552 aa)) are extracellular. N-linked (GlcNAc...) asparagine glycosylation is found at asparagine 69, asparagine 344, asparagine 451, and asparagine 465. 2 disulfide bridges follow: cysteine 439–cysteine 475 and cysteine 445–cysteine 476. The glycine site is built by serine 531, serine 533, and arginine 538. D-serine is bound by residues serine 533 and arginine 538. The chain crosses the membrane as a helical span at residues 575–594 (WSTWLGVFAALHLTALFLTV). At 595–615 (YEWRSPYGLTPRGRNRSTVFS) the chain is on the cytoplasmic side. Positions 616-627 (YSSALNLCYAIL) form an intramembrane region, discontinuously helical. Over 628–641 (FRRTVSSKTPKCPT) the chain is Cytoplasmic. A helical transmembrane segment spans residues 642-661 (GRLLMNLWAIFCLLVLSSYT). Over 662-832 (ANLAAVMVGD…TLQMSIYHFA (171 aa)) the chain is Extracellular. A glycine-binding site is contributed by serine 701. D-serine is bound by residues serine 701, alanine 702, and aspartate 745. Aspartate 745 contacts glycine. An N-linked (GlcNAc...) asparagine glycan is attached at asparagine 786. A helical membrane pass occupies residues 833 to 848 (GLFVLLCLGLGSALLS). Residues 849–1043 (SLGEHAFFRL…PHSGRPGSQE (195 aa)) lie on the Cytoplasmic side of the membrane. Disordered stretches follow at residues 882–924 (ALNT…WKRA) and 1012–1043 (GDSARHRPRRLLQARAAPAEAPPHSGRPGSQE). The involved in the trafficking and surface expression of NMDARs stretch occupies residues 979 to 1012 (QPGELQELERRIEVARERLRQALVRRGQLLAQLG). The segment covering 1024–1035 (QARAAPAEAPPH) has biased composition (low complexity).

It belongs to the glutamate-gated ion channel (TC 1.A.10.1) family. NR3B/GRIN3B subfamily. As to quaternary structure, forms heterotetrameric channels that contain at least two GluN1 subunits and at least a combination of one GluN2 and one GluN3 subunits (in vitro). Forms heterotetrameric channels composed of two GluN1/zeta subunits (GRIN1), and two identical GluN3 subunits (GRIN3A or GRIN3B) (in vitro). Does not form functional homomeric channels.

Its subcellular location is the cell membrane. It localises to the postsynaptic cell membrane. It carries out the reaction Ca(2+)(in) = Ca(2+)(out). It catalyses the reaction Na(+)(in) = Na(+)(out). Its function is as follows. Component of a non-conventional N-methyl-D-aspartate (NMDA) receptors (NMDARs) that function as heterotetrameric, ligand-gated cation channels with low calcium permeability and low voltage-dependent block by Mg(2+). Forms glutamatergic receptor complexes with GluN1 and GluN2 subunits which are activated by glycine binding to the GluN1 and GluN3 subunits and L-glutamate binding to GluN2 subunits. Forms excitatory glycinergic receptor complexes with GluN1 alone which are activated by glycine binding to the GluN1 and GluN3 subunits. GluN3B subunit also binds D-serine and, in the absence of glycine, activates glycinergic receptor complexes, but with lower efficacy than glycine. Each GluN3 subunit confers differential attributes to channel properties, including activation, deactivation and desensitization kinetics, pH sensitivity, Ca2(+) permeability, and binding to allosteric modulators. This Homo sapiens (Human) protein is Glutamate receptor ionotropic, NMDA 3B.